A 376-amino-acid chain; its full sequence is Queuine tRNA-ribosyltransferase (376 aa).

Residue aspartate 89 is the Proton acceptor of the active site. Substrate is bound by residues 89 to 93 (DSGGF), aspartate 143, glutamine 194, and glycine 221. An RNA binding region spans residues 252–258 (GVGIPSN). Residue aspartate 271 is the Nucleophile of the active site. The segment at 276 to 280 (ARNGR) is RNA binding; important for wobble base 34 recognition. Cysteine 309, cysteine 311, cysteine 314, and histidine 340 together coordinate Zn(2+).

It belongs to the queuine tRNA-ribosyltransferase family. As to quaternary structure, homodimer. Within each dimer, one monomer is responsible for RNA recognition and catalysis, while the other monomer binds to the replacement base PreQ1. Requires Zn(2+) as cofactor.

The enzyme catalyses 7-aminomethyl-7-carbaguanine + guanosine(34) in tRNA = 7-aminomethyl-7-carbaguanosine(34) in tRNA + guanine. Its pathway is tRNA modification; tRNA-queuosine biosynthesis. In terms of biological role, catalyzes the base-exchange of a guanine (G) residue with the queuine precursor 7-aminomethyl-7-deazaguanine (PreQ1) at position 34 (anticodon wobble position) in tRNAs with GU(N) anticodons (tRNA-Asp, -Asn, -His and -Tyr). Catalysis occurs through a double-displacement mechanism. The nucleophile active site attacks the C1' of nucleotide 34 to detach the guanine base from the RNA, forming a covalent enzyme-RNA intermediate. The proton acceptor active site deprotonates the incoming PreQ1, allowing a nucleophilic attack on the C1' of the ribose to form the product. After dissociation, two additional enzymatic reactions on the tRNA convert PreQ1 to queuine (Q), resulting in the hypermodified nucleoside queuosine (7-(((4,5-cis-dihydroxy-2-cyclopenten-1-yl)amino)methyl)-7-deazaguanosine). The sequence is that of Queuine tRNA-ribosyltransferase from Clostridium botulinum (strain Okra / Type B1).